The primary structure comprises 213 residues: Lysozyme g-like protein 2 (213 aa).

The N-terminal stretch at 1-19 (MVPSVVFWGLIALVGTAKG) is a signal peptide. 2 disulfide bridges follow: C40/C93 and C54/C62. The active site involves E106.

It belongs to the glycosyl hydrolase 23 family.

Its subcellular location is the secreted. In terms of biological role, may act as a potent antibacterial protein that may play a role in the innate immunity. This Mus musculus (Mouse) protein is Lysozyme g-like protein 2 (Lyg2).